Here is a 405-residue protein sequence, read N- to C-terminus: L-rhamnonate dehydratase (405 aa).

Histidine 33 and arginine 59 together coordinate substrate. Mg(2+) contacts are provided by aspartate 226, glutamate 252, and glutamate 280. Histidine 329 acts as the Proton acceptor in catalysis. Glutamate 349 provides a ligand contact to substrate.

This sequence belongs to the mandelate racemase/muconate lactonizing enzyme family. RhamD subfamily. In terms of assembly, homooctamer; tetramer of dimers. It depends on Mg(2+) as a cofactor.

It carries out the reaction L-rhamnonate = 2-dehydro-3-deoxy-L-rhamnonate + H2O. In terms of biological role, catalyzes the dehydration of L-rhamnonate to 2-keto-3-deoxy-L-rhamnonate (KDR). The protein is L-rhamnonate dehydratase of Salmonella paratyphi C (strain RKS4594).